A 137-amino-acid polypeptide reads, in one-letter code: Large ribosomal subunit protein uL22 (137 aa).

This sequence belongs to the universal ribosomal protein uL22 family. Part of the 50S ribosomal subunit.

In terms of biological role, this protein binds specifically to 23S rRNA; its binding is stimulated by other ribosomal proteins, e.g. L4, L17, and L20. It is important during the early stages of 50S assembly. It makes multiple contacts with different domains of the 23S rRNA in the assembled 50S subunit and ribosome. Functionally, the globular domain of the protein is located near the polypeptide exit tunnel on the outside of the subunit, while an extended beta-hairpin is found that lines the wall of the exit tunnel in the center of the 70S ribosome. In Flavobacterium psychrophilum (strain ATCC 49511 / DSM 21280 / CIP 103535 / JIP02/86), this protein is Large ribosomal subunit protein uL22.